We begin with the raw amino-acid sequence, 266 residues long: ATP synthase subunit a (266 aa).

6 helical membrane passes run 38 to 58 (KQML…ILAA), 99 to 119 (LLFS…IPVI), 126 to 146 (HVGG…IIGI), 162 to 182 (GVPW…NFLV), 191 to 211 (LFAT…GIEF), and 224 to 244 (SVLV…IMAL).

It belongs to the ATPase A chain family. F-type ATPases have 2 components, CF(1) - the catalytic core - and CF(0) - the membrane proton channel. CF(1) has five subunits: alpha(3), beta(3), gamma(1), delta(1), epsilon(1). CF(0) has three main subunits: a(1), b(2) and c(9-12). The alpha and beta chains form an alternating ring which encloses part of the gamma chain. CF(1) is attached to CF(0) by a central stalk formed by the gamma and epsilon chains, while a peripheral stalk is formed by the delta and b chains.

The protein resides in the cell membrane. In terms of biological role, key component of the proton channel; it plays a direct role in the translocation of protons across the membrane. This Paenarthrobacter aurescens (strain TC1) protein is ATP synthase subunit a.